We begin with the raw amino-acid sequence, 144 residues long: Cytochrome c oxidase subunit 4 isoform 1, mitochondrial (144 aa).

Over 1–73 the chain is Mitochondrial matrix; that stretch reads SVVKSEDFSL…SFAEMNRGSN (73 aa). Lys4 carries the N6-acetyllysine; alternate modification. Lys4 is modified (N6-succinyllysine; alternate). Lys28 bears the N6-acetyllysine mark. Ser31 and Ser33 each carry phosphoserine. At Lys35 the chain carries N6-acetyllysine; alternate. Lys35 is subject to N6-succinyllysine; alternate. Lys42 is subject to N6-acetyllysine. Residues 74 to 99 form a helical membrane-spanning segment; it reads EWKTVVGGAMFFIGFTALVIMWQKHY. The Mitochondrial intermembrane portion of the chain corresponds to 100–144; it reads VYGPLPQSFDKEWVAKQTKRMLDMKVNPIQGLASKWDYEKNEWKK.

It belongs to the cytochrome c oxidase IV family. As to quaternary structure, component of the cytochrome c oxidase (complex IV, CIV), a multisubunit enzyme composed of 14 subunits. The complex is composed of a catalytic core of 3 subunits MT-CO1, MT-CO2 and MT-CO3, encoded in the mitochondrial DNA, and 11 supernumerary subunits COX4I, COX5A, COX5B, COX6A, COX6B, COX6C, COX7A, COX7B, COX7C, COX8 and NDUFA4, which are encoded in the nuclear genome. The complex exists as a monomer or a dimer and forms supercomplexes (SCs) in the inner mitochondrial membrane with NADH-ubiquinone oxidoreductase (complex I, CI) and ubiquinol-cytochrome c oxidoreductase (cytochrome b-c1 complex, complex III, CIII), resulting in different assemblies (supercomplex SCI(1)III(2)IV(1) and megacomplex MCI(2)III(2)IV(2)). Interacts with PHB2; the interaction decreases in absence of SPHK2. Interacts with AFG1L. Interacts with ABCB7; this interaction allows the regulation of cellular iron homeostasis and cellular reactive oxygen species (ROS) levels in cardiomyocytes. Interacts with FLVCR2; this interaction occurs in the absence of heme and is disrupted upon heme binding. Interacts with IRGC.

Its subcellular location is the mitochondrion inner membrane. It functions in the pathway energy metabolism; oxidative phosphorylation. Component of the cytochrome c oxidase, the last enzyme in the mitochondrial electron transport chain which drives oxidative phosphorylation. The respiratory chain contains 3 multisubunit complexes succinate dehydrogenase (complex II, CII), ubiquinol-cytochrome c oxidoreductase (cytochrome b-c1 complex, complex III, CIII) and cytochrome c oxidase (complex IV, CIV), that cooperate to transfer electrons derived from NADH and succinate to molecular oxygen, creating an electrochemical gradient over the inner membrane that drives transmembrane transport and the ATP synthase. Cytochrome c oxidase is the component of the respiratory chain that catalyzes the reduction of oxygen to water. Electrons originating from reduced cytochrome c in the intermembrane space (IMS) are transferred via the dinuclear copper A center (CU(A)) of subunit 2 and heme A of subunit 1 to the active site in subunit 1, a binuclear center (BNC) formed by heme A3 and copper B (CU(B)). The BNC reduces molecular oxygen to 2 water molecules using 4 electrons from cytochrome c in the IMS and 4 protons from the mitochondrial matrix. This Pan troglodytes (Chimpanzee) protein is Cytochrome c oxidase subunit 4 isoform 1, mitochondrial (COX4I1).